The sequence spans 235 residues: Glutathione S-transferase 1 (235 aa).

A GST N-terminal domain is found at 36-113; that stretch reads EKYTLTYFNG…LLGGRFGLLG (78 aa). Residues tyrosine 42, tryptophan 73, lysine 77, valine 85, and 97-98 each bind glutathione; that span reads ES. The GST C-terminal domain occupies 115 to 235; it reads NDWEEAKIMA…WIKKRPKTYF (121 aa).

It belongs to the GST superfamily. Homodimer.

It catalyses the reaction RX + glutathione = an S-substituted glutathione + a halide anion + H(+). The sequence is that of Glutathione S-transferase 1 (GST1) from Onchocerca volvulus.